The primary structure comprises 474 residues: Cytochrome c biogenesis protein CcsB (474 aa).

Transmembrane regions (helical) follow at residues 36–56 (LKLA…GTVI), 96–116 (SWWF…CTFR), and 182–202 (VGPI…MIGA).

The protein belongs to the Ccs1/CcsB family. May interact with CcsA.

It is found in the cell inner membrane. Functionally, required during biogenesis of c-type cytochromes (cytochrome c6 and cytochrome f) at the step of heme attachment. The polypeptide is Cytochrome c biogenesis protein CcsB (Gloeobacter violaceus (strain ATCC 29082 / PCC 7421)).